A 75-amino-acid chain; its full sequence is RNA-binding protein Hfq (75 aa).

A Sm domain is found at 9 to 69 (DQFLNQLRKE…ISTFAPERNI (61 aa)).

This sequence belongs to the Hfq family. In terms of assembly, homohexamer.

Functionally, RNA chaperone that binds small regulatory RNA (sRNAs) and mRNAs to facilitate mRNA translational regulation in response to envelope stress, environmental stress and changes in metabolite concentrations. Also binds with high specificity to tRNAs. In Geobacillus kaustophilus (strain HTA426), this protein is RNA-binding protein Hfq.